A 184-amino-acid chain; its full sequence is NADH-quinone oxidoreductase subunit B (184 aa).

[4Fe-4S] cluster-binding residues include Cys63, Cys64, Cys128, and Cys158.

This sequence belongs to the complex I 20 kDa subunit family. NDH-1 is composed of 14 different subunits. Subunits NuoB, C, D, E, F, and G constitute the peripheral sector of the complex. [4Fe-4S] cluster serves as cofactor.

It localises to the cell inner membrane. The catalysed reaction is a quinone + NADH + 5 H(+)(in) = a quinol + NAD(+) + 4 H(+)(out). Functionally, NDH-1 shuttles electrons from NADH, via FMN and iron-sulfur (Fe-S) centers, to quinones in the respiratory chain. The immediate electron acceptor for the enzyme in this species is believed to be ubiquinone. Couples the redox reaction to proton translocation (for every two electrons transferred, four hydrogen ions are translocated across the cytoplasmic membrane), and thus conserves the redox energy in a proton gradient. The polypeptide is NADH-quinone oxidoreductase subunit B (Xanthomonas axonopodis pv. citri (strain 306)).